The chain runs to 415 residues: Putative O-antigen transporter (415 aa).

Residues 1–11 (MNTNKLSLRRN) lie on the Cytoplasmic side of the membrane. The helical transmembrane segment at 12 to 32 (VIYLAVVQGSNYLLPLLTFPY) threads the bilayer. At 33–41 (LVRTLGPEN) the chain is on the periplasmic side. A helical membrane pass occupies residues 42-62 (FGIFGFCQATMLYMIMFVEYG). Over 63–83 (FNLTATQSIAKAADSKDKVTS) the chain is Cytoplasmic. A helical transmembrane segment spans residues 84-104 (IFWAVIFSKIVLIVITLIFLT). Residues 105–117 (SMTLLVPEYNKHA) lie on the Periplasmic side of the membrane. The helical transmembrane segment at 118 to 138 (VIIWSFVPALVGNLIYPIWLF) threads the bilayer. The Cytoplasmic segment spans residues 139 to 173 (QGKEKMKWLTLSSILSRLAIIPLTFIFVNTKSDIA). Residues 174–194 (IAGFIQSSANLVAGIIALAIV) traverse the membrane as a helical segment. Topologically, residues 195–220 (VHEGWIGKVTLSLHNVRRSLADGFHV) are periplasmic. A helical transmembrane segment spans residues 221–241 (FISTSAISLYSTGIVIILGFI). At 242–295 (SGPTSVGNFNAANTIRNALQGLLNPITQAIYPRISSTLVLNRVKGVILIKKSLT) the chain is on the cytoplasmic side. A helical membrane pass occupies residues 296 to 316 (CLSLIGGAFSLILLLGASILV). Residues 317 to 328 (KISIGPGYDNAV) are Periplasmic-facing. The helical transmembrane segment at 329 to 349 (IVLMIISPLPFLISLSNVYGI) threads the bilayer. The Cytoplasmic segment spans residues 350 to 362 (QVMLTHNYKKEFS). Residues 363–383 (KILIAAGLLSLLLIFPLTTLF) form a helical membrane-spanning segment. Residues 384–385 (KE) are Periplasmic-facing. The helical transmembrane segment at 386-406 (IGAAITLLATECLVTSLMLMF) threads the bilayer. The Cytoplasmic portion of the chain corresponds to 407–415 (VRNNKLLVC).

Belongs to the polysaccharide synthase family.

The protein resides in the cell inner membrane. It participates in bacterial outer membrane biogenesis; LPS O-antigen biosynthesis. In terms of biological role, may be involved in the translocation process of the nascent O-polysaccharide molecules and/or its ligation to lipid A core units. The sequence is that of Putative O-antigen transporter (rfbX) from Escherichia coli (strain K12).